The primary structure comprises 132 residues: Phosphoribosyl-AMP cyclohydrolase (132 aa).

Asp85 is a binding site for Mg(2+). Cys86 is a Zn(2+) binding site. Mg(2+) contacts are provided by Asp87 and Asp89. The Zn(2+) site is built by Cys102 and Cys109.

The protein belongs to the PRA-CH family. In terms of assembly, homodimer. Mg(2+) serves as cofactor. Zn(2+) is required as a cofactor.

The protein localises to the cytoplasm. The catalysed reaction is 1-(5-phospho-beta-D-ribosyl)-5'-AMP + H2O = 1-(5-phospho-beta-D-ribosyl)-5-[(5-phospho-beta-D-ribosylamino)methylideneamino]imidazole-4-carboxamide. It functions in the pathway amino-acid biosynthesis; L-histidine biosynthesis; L-histidine from 5-phospho-alpha-D-ribose 1-diphosphate: step 3/9. In terms of biological role, catalyzes the hydrolysis of the adenine ring of phosphoribosyl-AMP. This Frankia alni (strain DSM 45986 / CECT 9034 / ACN14a) protein is Phosphoribosyl-AMP cyclohydrolase.